We begin with the raw amino-acid sequence, 140 residues long: Large ribosomal subunit protein uL14 (140 aa).

This sequence belongs to the universal ribosomal protein uL14 family. In terms of assembly, component of the large ribosomal subunit.

The protein resides in the cytoplasm. Component of the large ribosomal subunit. The ribosome is a large ribonucleoprotein complex responsible for the synthesis of proteins in the cell. The sequence is that of Large ribosomal subunit protein uL14 (rpl23) from Ictalurus punctatus (Channel catfish).